The following is a 138-amino-acid chain: MAQAPEYHYVGSVDYQPTRPSAHQNLIELYGLTELAKKVGRVDEFGNKRKMRRSYKAYIQDLPGYNEILRDNTIKQWLTNPIREEVPIDIEFLHHVFSVEPGIIPGFNPKVFGLEDDVVMGNVSRDSSQPRSPSRRKK.

Belongs to the Mediator complex subunit 19 family. Component of the Mediator complex.

It localises to the nucleus. Its function is as follows. Component of the Mediator complex, a coactivator involved in the regulated transcription of nearly all RNA polymerase II-dependent genes. Mediator functions as a bridge to convey information from gene-specific regulatory proteins to the basal RNA polymerase II transcription machinery. Mediator is recruited to promoters by direct interactions with regulatory proteins and serves as a scaffold for the assembly of a functional preinitiation complex with RNA polymerase II and the general transcription factors. This is Mediator of RNA polymerase II transcription subunit 19 (med19) from Schizosaccharomyces pombe (strain 972 / ATCC 24843) (Fission yeast).